A 171-amino-acid chain; its full sequence is Transcription factor E (171 aa).

The HTH TFE/IIEalpha-type domain maps to 5–91 (DNKAVRGYIQ…LWKLDLDNSV (87 aa)).

Belongs to the TFE family. Monomer. Interaction with RNA polymerase subunits RpoF and RpoE is necessary for Tfe stimulatory transcription activity. Able to interact with Tbp and RNA polymerase in the absence of DNA promoter. Interacts both with the preinitiation and elongation complexes.

Functionally, transcription factor that plays a role in the activation of archaeal genes transcribed by RNA polymerase. Facilitates transcription initiation by enhancing TATA-box recognition by TATA-box-binding protein (Tbp), and transcription factor B (Tfb) and RNA polymerase recruitment. Not absolutely required for transcription in vitro, but particularly important in cases where Tbp or Tfb function is not optimal. It dynamically alters the nucleic acid-binding properties of RNA polymerases by stabilizing the initiation complex and destabilizing elongation complexes. Seems to translocate with the RNA polymerase following initiation and acts by binding to the non template strand of the transcription bubble in elongation complexes. This chain is Transcription factor E, found in Methanocella arvoryzae (strain DSM 22066 / NBRC 105507 / MRE50).